The primary structure comprises 61 residues: Small ribosomal subunit protein uS14B (61 aa).

Zn(2+) is bound by residues Cys24, Cys27, Cys40, and Cys43.

The protein belongs to the universal ribosomal protein uS14 family. Zinc-binding uS14 subfamily. As to quaternary structure, part of the 30S ribosomal subunit. Contacts proteins S3 and S10. The cofactor is Zn(2+).

Functionally, binds 16S rRNA, required for the assembly of 30S particles and may also be responsible for determining the conformation of the 16S rRNA at the A site. The chain is Small ribosomal subunit protein uS14B from Saccharopolyspora erythraea (strain ATCC 11635 / DSM 40517 / JCM 4748 / NBRC 13426 / NCIMB 8594 / NRRL 2338).